The primary structure comprises 145 residues: Large ribosomal subunit protein bL9 (145 aa).

The protein belongs to the bacterial ribosomal protein bL9 family.

Binds to the 23S rRNA. The chain is Large ribosomal subunit protein bL9 from Mesomycoplasma hyopneumoniae (strain J / ATCC 25934 / NCTC 10110) (Mycoplasma hyopneumoniae).